A 239-amino-acid polypeptide reads, in one-letter code: Uridylate kinase (239 aa).

Lys-13–Gly-16 is an ATP binding site. Gly-55 provides a ligand contact to UMP. ATP-binding residues include Gly-56 and Arg-60. Residues Asp-75 and Thr-136–Thr-143 each bind UMP. ATP is bound by residues Thr-163, Gln-164, Tyr-169, and Asp-172.

Belongs to the UMP kinase family. Homohexamer.

The protein localises to the cytoplasm. It carries out the reaction UMP + ATP = UDP + ADP. It participates in pyrimidine metabolism; CTP biosynthesis via de novo pathway; UDP from UMP (UMPK route): step 1/1. With respect to regulation, inhibited by UTP. Its function is as follows. Catalyzes the reversible phosphorylation of UMP to UDP. The protein is Uridylate kinase of Bartonella henselae (strain ATCC 49882 / DSM 28221 / CCUG 30454 / Houston 1) (Rochalimaea henselae).